The chain runs to 702 residues: Polyribonucleotide nucleotidyltransferase (702 aa).

Asp491 and Asp497 together coordinate Mg(2+). Residues Pro558–Ile618 form the KH domain. Residues Gly628–Ile696 form the S1 motif domain.

It belongs to the polyribonucleotide nucleotidyltransferase family. Requires Mg(2+) as cofactor.

It is found in the cytoplasm. It catalyses the reaction RNA(n+1) + phosphate = RNA(n) + a ribonucleoside 5'-diphosphate. Functionally, involved in mRNA degradation. Catalyzes the phosphorolysis of single-stranded polyribonucleotides processively in the 3'- to 5'-direction. This is Polyribonucleotide nucleotidyltransferase from Spiroplasma citri.